Reading from the N-terminus, the 248-residue chain is Probable aquaporin TIP2-2 (248 aa).

Transmembrane regions (helical) follow at residues 21–41 and 55–75; these read AYVAEFISTLVFVFAGVGSAI and AGLVAVAVCHGFGLFVAVAIG. The NPA 1 motif lies at 84 to 86; the sequence is NPA. 3 consecutive transmembrane segments (helical) span residues 87–109, 133–153, and 168–188; these read VTFGLALGGQITILTGVFYWIAQ, LSGVGAFEGVVMEIIVTFGLV, and LGTIAPIAIGFIVGANILVAG. Positions 196-198 match the NPA 2 motif; the sequence is NPA. Residues 210–230 form a helical membrane-spanning segment; the sequence is YTNIWIYWVGPLVGGGLAGLV.

This sequence belongs to the MIP/aquaporin (TC 1.A.8) family. TIP (TC 1.A.8.10) subfamily. In terms of tissue distribution, expressed in roots and leaves.

It localises to the vacuole membrane. In terms of biological role, aquaporins facilitate the transport of water and small neutral solutes across cell membranes. May be involved in transport from the vacuolar compartment to the cytoplasm. This is Probable aquaporin TIP2-2 (TIP2-2) from Oryza sativa subsp. japonica (Rice).